Consider the following 61-residue polypeptide: Large ribosomal subunit protein uL30 (61 aa).

The interval 1-20 is disordered; the sequence is MSQKKVTVRQVGSPIGRKPE.

Belongs to the universal ribosomal protein uL30 family. In terms of assembly, part of the 50S ribosomal subunit.

The chain is Large ribosomal subunit protein uL30 from Hyphomonas neptunium (strain ATCC 15444).